The sequence spans 303 residues: HTH-type transcriptional regulator CatM (303 aa).

Positions 1 to 58 (MELRHLRYFVTVVEEQSISKAAEKLCIAQPPLSRQIQKLEEELGIQLFERGFRPAKVT) constitute an HTH lysR-type domain. Residues 18 to 37 (ISKAAEKLCIAQPPLSRQIQ) constitute a DNA-binding region (H-T-H motif). Cis,cis-muconate contacts are provided by serine 99 and threonine 128.

The protein belongs to the LysR transcriptional regulatory family. In terms of assembly, homotetramer in solution.

Its function is as follows. Positively regulates the expression of catA, catBCIJFD and benPK in response to cis,cis-muconate. It binds to the catB-catM intercistronic region, to a specific sequence upstream of catA and to the benPK promoter region. Can also repress pca genes. In Acinetobacter baylyi (strain ATCC 33305 / BD413 / ADP1), this protein is HTH-type transcriptional regulator CatM (catM).